The following is a 353-amino-acid chain: Photosystem II D2 protein (353 aa).

Thr2 carries the N-acetylthreonine modification. Phosphothreonine is present on Thr2. A helical transmembrane segment spans residues 41-61; that stretch reads CAYFALGGWFTGTTFVTSWYT. Residue His118 coordinates chlorophyll a. Residues 125–141 traverse the membrane as a helical segment; sequence GFMLRQFELARSVQLRP. Residues Gln130 and Asn143 each contribute to the pheophytin a site. A helical transmembrane segment spans residues 153-166; the sequence is VFVSVFLIYPLGQS. Residue His198 participates in chlorophyll a binding. A helical membrane pass occupies residues 208–228; the sequence is AALLCAIHGATVENTLFEDGD. 2 residues coordinate a plastoquinone: His215 and Phe262. Position 215 (His215) interacts with Fe cation. His269 contributes to the Fe cation binding site. The helical transmembrane segment at 279 to 295 threads the bilayer; that stretch reads GLWMSALGVVGLALNLR.

It belongs to the reaction center PufL/M/PsbA/D family. As to quaternary structure, PSII is composed of 1 copy each of membrane proteins PsbA, PsbB, PsbC, PsbD, PsbE, PsbF, PsbH, PsbI, PsbJ, PsbK, PsbL, PsbM, PsbT, PsbX, PsbY, PsbZ, Psb30/Ycf12, at least 3 peripheral proteins of the oxygen-evolving complex and a large number of cofactors. It forms dimeric complexes. It depends on The D1/D2 heterodimer binds P680, chlorophylls that are the primary electron donor of PSII, and subsequent electron acceptors. It shares a non-heme iron and each subunit binds pheophytin, quinone, additional chlorophylls, carotenoids and lipids. There is also a Cl(-1) ion associated with D1 and D2, which is required for oxygen evolution. The PSII complex binds additional chlorophylls, carotenoids and specific lipids. as a cofactor.

It localises to the plastid. It is found in the chloroplast thylakoid membrane. It catalyses the reaction 2 a plastoquinone + 4 hnu + 2 H2O = 2 a plastoquinol + O2. Functionally, photosystem II (PSII) is a light-driven water:plastoquinone oxidoreductase that uses light energy to abstract electrons from H(2)O, generating O(2) and a proton gradient subsequently used for ATP formation. It consists of a core antenna complex that captures photons, and an electron transfer chain that converts photonic excitation into a charge separation. The D1/D2 (PsbA/PsbD) reaction center heterodimer binds P680, the primary electron donor of PSII as well as several subsequent electron acceptors. D2 is needed for assembly of a stable PSII complex. The protein is Photosystem II D2 protein of Phaseolus vulgaris (Kidney bean).